The primary structure comprises 460 residues: uncharacterized protein (460 aa).

The TRAM domain maps to 8–66; the sequence is PVEKNEFIDVVFEDLTHDGAGVAKVKGYPIFVKNGLPGEEAQIKIIKVKKNFAFGRLMK. Residues C79, C85, C88, and C166 each contribute to the [4Fe-4S] cluster site. S-adenosyl-L-methionine-binding residues include Q290, Y319, E340, and D388. The active-site Nucleophile is C415.

The protein belongs to the class I-like SAM-binding methyltransferase superfamily. RNA M5U methyltransferase family.

This is an uncharacterized protein from Bacillus cereus (strain ATCC 10987 / NRS 248).